The following is a 160-amino-acid chain: MLSPKRTKFRKQHRGRMKGIASKGNTIAFGQFALQAQDCGWVTARQIEASRRAMTRYVKRGGKIWIRIFPDKPVTMRPAETRMGSGKGNPEFWVAVVKPGRILFEMGGEEITEEIAKEAMRLAQYKLPVKTKFISSDINLSSDSSGEGKTGKDSKEEVKK.

The tract at residues 138 to 160 (INLSSDSSGEGKTGKDSKEEVKK) is disordered. Residues 149 to 160 (KTGKDSKEEVKK) are compositionally biased toward basic and acidic residues.

This sequence belongs to the universal ribosomal protein uL16 family. Part of the 50S ribosomal subunit.

Functionally, binds 23S rRNA and is also seen to make contacts with the A and possibly P site tRNAs. The protein is Large ribosomal subunit protein uL16 of Prochlorococcus marinus subsp. pastoris (strain CCMP1986 / NIES-2087 / MED4).